The primary structure comprises 696 residues: DNA-directed RNA polymerase subunit beta' (696 aa).

4 residues coordinate Zn(2+): C69, C71, C87, and C90. Mg(2+) is bound by residues D504, D506, and D508.

Belongs to the RNA polymerase beta' chain family. RpoC1 subfamily. As to quaternary structure, in plastids the minimal PEP RNA polymerase catalytic core is composed of four subunits: alpha, beta, beta', and beta''. When a (nuclear-encoded) sigma factor is associated with the core the holoenzyme is formed, which can initiate transcription. Requires Mg(2+) as cofactor. Zn(2+) is required as a cofactor.

Its subcellular location is the plastid. It is found in the chloroplast. The catalysed reaction is RNA(n) + a ribonucleoside 5'-triphosphate = RNA(n+1) + diphosphate. Functionally, DNA-dependent RNA polymerase catalyzes the transcription of DNA into RNA using the four ribonucleoside triphosphates as substrates. This is DNA-directed RNA polymerase subunit beta' from Pinus koraiensis (Korean pine).